Consider the following 342-residue polypeptide: Glucokinase (342 aa).

Residue 15-20 (GDVGGT) participates in ATP binding.

Belongs to the bacterial glucokinase family.

Its subcellular location is the cytoplasm. It carries out the reaction D-glucose + ATP = D-glucose 6-phosphate + ADP + H(+). The sequence is that of Glucokinase from Ralstonia nicotianae (strain ATCC BAA-1114 / GMI1000) (Ralstonia solanacearum).